A 143-amino-acid polypeptide reads, in one-letter code: Fluoride-specific ion channel FluC (143 aa).

4 helical membrane-spanning segments follow: residues 6–26, 38–58, 70–90, and 103–123; these read CILV…VSVL, TILI…LTLA, LFVM…SLQT, and MVNV…GHVV. Residues Gly78 and Thr81 each coordinate Na(+).

It belongs to the fluoride channel Fluc/FEX (TC 1.A.43) family.

It localises to the cell inner membrane. It catalyses the reaction fluoride(in) = fluoride(out). With respect to regulation, na(+) is not transported, but it plays an essential structural role and its presence is essential for fluoride channel function. Its function is as follows. Fluoride-specific ion channel. Important for reducing fluoride concentration in the cell, thus reducing its toxicity. This chain is Fluoride-specific ion channel FluC, found in Methylobacterium radiotolerans (strain ATCC 27329 / DSM 1819 / JCM 2831 / NBRC 15690 / NCIMB 10815 / 0-1).